The following is a 282-amino-acid chain: MSNKIINLGSIEIANDKPFVLFGGMNVLESRDLAMSIAETYAEVTQKLGIPYVFKASFDKANRSSVNSYRGPGMEEGLKIFEEIKKTFNLPLITDVHEPYQCAPVAEVVDIIQLPAFLARQTDLVVAMAKTGAIINVKKPQFLAPHEMRHIITKFNEAGNDEIILCERGSCFGYNNLVVDMLGMDEMKQSGYPVIFDATHALQRPGGRADSAGGRRAQATELARSGMALGLAGLFIEAHPDPDNAKCDGPCALPLHQLENYLKQMKAIDDLVKSFDPIDTSK.

Belongs to the KdsA family.

The protein resides in the cytoplasm. It catalyses the reaction D-arabinose 5-phosphate + phosphoenolpyruvate + H2O = 3-deoxy-alpha-D-manno-2-octulosonate-8-phosphate + phosphate. It functions in the pathway carbohydrate biosynthesis; 3-deoxy-D-manno-octulosonate biosynthesis; 3-deoxy-D-manno-octulosonate from D-ribulose 5-phosphate: step 2/3. Its pathway is bacterial outer membrane biogenesis; lipopolysaccharide biosynthesis. The sequence is that of 2-dehydro-3-deoxyphosphooctonate aldolase from Shewanella sp. (strain MR-4).